The following is a 520-amino-acid chain: Transactivator/viroplasmin protein (520 aa).

The segment at 487 to 520 is disordered; that stretch reads QNASADSGPKDGPPPTRSIVEKEDVPTTSSKQVD.

It belongs to the caulimoviridae viroplasmin family.

Its subcellular location is the host cytoplasm. Its function is as follows. Enhances the ribosomal termination-reinitiation event leading to the translation of major open reading frames on the polycistronic viral RNAs. In Arabidopsis thaliana (Mouse-ear cress), this protein is Transactivator/viroplasmin protein.